The following is a 216-amino-acid chain: Protein-L-isoaspartate O-methyltransferase (216 aa).

The active site involves serine 61.

The protein belongs to the methyltransferase superfamily. L-isoaspartyl/D-aspartyl protein methyltransferase family.

It localises to the cytoplasm. The enzyme catalyses [protein]-L-isoaspartate + S-adenosyl-L-methionine = [protein]-L-isoaspartate alpha-methyl ester + S-adenosyl-L-homocysteine. Catalyzes the methyl esterification of L-isoaspartyl residues in peptides and proteins that result from spontaneous decomposition of normal L-aspartyl and L-asparaginyl residues. It plays a role in the repair and/or degradation of damaged proteins. The chain is Protein-L-isoaspartate O-methyltransferase (pcm) from Pyrococcus abyssi (strain GE5 / Orsay).